The sequence spans 274 residues: Rhamnulose-1-phosphate aldolase (274 aa).

Residue glutamate 117 is part of the active site. The Zn(2+) site is built by histidine 141, histidine 143, and histidine 212.

This sequence belongs to the aldolase class II family. RhaD subfamily. Homotetramer. Requires Zn(2+) as cofactor.

The protein resides in the cytoplasm. It catalyses the reaction L-rhamnulose 1-phosphate = (S)-lactaldehyde + dihydroxyacetone phosphate. Its pathway is carbohydrate degradation; L-rhamnose degradation; glycerone phosphate from L-rhamnose: step 3/3. In terms of biological role, catalyzes the reversible cleavage of L-rhamnulose-1-phosphate to dihydroxyacetone phosphate (DHAP) and L-lactaldehyde. The chain is Rhamnulose-1-phosphate aldolase from Escherichia coli O45:K1 (strain S88 / ExPEC).